A 690-amino-acid polypeptide reads, in one-letter code: Methionine--tRNA ligase (690 aa).

The 'HIGH' region motif lies at 13-23 (PYANGQIHIGH). Residues C144, C147, C157, and C160 each coordinate Zn(2+). Residues 335 to 339 (KMSKS) carry the 'KMSKS' region motif. K338 contributes to the ATP binding site. Positions 584–690 (DFAKIDLRVA…SGAVPGMRIR (107 aa)) constitute a tRNA-binding domain.

This sequence belongs to the class-I aminoacyl-tRNA synthetase family. MetG type 1 subfamily. As to quaternary structure, homodimer. Zn(2+) serves as cofactor.

Its subcellular location is the cytoplasm. It catalyses the reaction tRNA(Met) + L-methionine + ATP = L-methionyl-tRNA(Met) + AMP + diphosphate. Its function is as follows. Is required not only for elongation of protein synthesis but also for the initiation of all mRNA translation through initiator tRNA(fMet) aminoacylation. The sequence is that of Methionine--tRNA ligase from Cupriavidus metallidurans (strain ATCC 43123 / DSM 2839 / NBRC 102507 / CH34) (Ralstonia metallidurans).